Consider the following 415-residue polypeptide: uncharacterized protein (415 aa).

The next 10 helical transmembrane spans lie at 20–40 (MAYLFYFITAFLLGTEAFGIL), 43–63 (LMPIADTLTIFFSSGIPPAIA), 78–98 (IPILYLMILLSVVGFILTPYI), 109–129 (LPNILYFAVGLCVVASTVIAF), 155–175 (VILVFILTLYLGIFGSLLSIS), 243–263 (IVIMSIMGGFWSGIYGYSSLI), 300–320 (IFSSIFVIGCLFFPEIPLIAF), 328–348 (GILCLRILAISSLFMSYYTLI), 360–380 (ISFYIILFGLVLNIILNLILV), and 388–408 (GSLATLITSISVFLIGVFAIL).

This sequence belongs to the polysaccharide synthase family.

The protein localises to the cell membrane. This is an uncharacterized protein from Methanocaldococcus jannaschii (strain ATCC 43067 / DSM 2661 / JAL-1 / JCM 10045 / NBRC 100440) (Methanococcus jannaschii).